The primary structure comprises 171 residues: Shikimate kinase (171 aa).

An ATP-binding site is contributed by 14-19; the sequence is GAGKST. S18 is a Mg(2+) binding site. Positions 36, 60, and 82 each coordinate substrate. Residue R120 coordinates ATP. R139 lines the substrate pocket. Q156 serves as a coordination point for ATP.

Belongs to the shikimate kinase family. In terms of assembly, monomer. Requires Mg(2+) as cofactor.

The protein resides in the cytoplasm. The catalysed reaction is shikimate + ATP = 3-phosphoshikimate + ADP + H(+). Its pathway is metabolic intermediate biosynthesis; chorismate biosynthesis; chorismate from D-erythrose 4-phosphate and phosphoenolpyruvate: step 5/7. Its function is as follows. Catalyzes the specific phosphorylation of the 3-hydroxyl group of shikimic acid using ATP as a cosubstrate. This is Shikimate kinase from Shewanella oneidensis (strain ATCC 700550 / JCM 31522 / CIP 106686 / LMG 19005 / NCIMB 14063 / MR-1).